The following is a 520-amino-acid chain: Nonsense-mediated mRNA decay factor SMG9 (520 aa).

3 disordered regions span residues 1-94, 108-143, and 341-360; these read MSES…PAPL, KGPV…QRPT, and KPST…SDEG. Ser-2 bears the N-acetylserine mark. 5 positions are modified to phosphoserine: Ser-2, Ser-4, Ser-7, Ser-32, and Ser-53. Residues 36 to 53 show a composition bias toward basic and acidic residues; it reads GRERDYIAPWERERRDAS. Composition is skewed to pro residues over residues 78–94 and 122–133; these read QPPP…PAPL and TAPPPPAAPAPP. Over residues 342–357 the composition is skewed to low complexity; it reads PSTPSPSHESSSSSGS. A Phosphoserine modification is found at Ser-451.

It belongs to the SMG9 family. As to quaternary structure, self-associates to form homodimers and forms heterodimers with SMG8; these assembly forms may represent SMG1C intermediate forms. Component of the SMG1C complex composed of SMG1, SMG8 and SMG9. Interacts with DHX34; the interaction is RNA-independent. In terms of processing, phosphorylated by SMG1.

Involved in nonsense-mediated decay (NMD) of mRNAs containing premature stop codons. Is recruited by release factors to stalled ribosomes together with SMG1 and SMG8 (forming the SMG1C protein kinase complex) and, in the SMG1C complex, is required for the efficient association between SMG1 and SMG8. Plays a role in brain, heart, and eye development. In Homo sapiens (Human), this protein is Nonsense-mediated mRNA decay factor SMG9.